The primary structure comprises 36 residues: MSDIN-like toxin proprotein 10 (36 aa).

Positions 1-10 are excised as a propeptide; it reads MSDINATRLP. Positions 11 to 19 form a cross-link, cyclopeptide (Gly-Pro); the sequence is GAYPPVPMP. The propeptide occupies 20 to 36; the sequence is CVGDADNFTLTRGENLC.

Belongs to the MSDIN fungal toxin family. Post-translationally, processed by the macrocyclase-peptidase enzyme POPB to yield a toxic cyclic nonapeptide. POPB first removes 10 residues from the N-terminus. Conformational trapping of the remaining peptide forces the enzyme to release this intermediate rather than proceed to macrocyclization. The enzyme rebinds the remaining peptide in a different conformation and catalyzes macrocyclization of the N-terminal 9 residues.

In terms of biological role, probable toxin that belongs to the MSDIN-like toxin family responsible for a large number of food poisoning cases and deaths. The polypeptide is MSDIN-like toxin proprotein 10 (Amanita bisporigera (Destroying angel)).